The following is a 264-amino-acid chain: Pyridoxine 5'-phosphate synthase (264 aa).

A compositionally biased stretch (polar residues) spans 1–21; that stretch reads MTDTAQILPTTLEQNPQNTSK. The tract at residues 1 to 22 is disordered; the sequence is MTDTAQILPTTLEQNPQNTSKK. Residue N28 participates in 3-amino-2-oxopropyl phosphate binding. 1-deoxy-D-xylulose 5-phosphate is bound at residue 30–31; it reads DH. R39 contributes to the 3-amino-2-oxopropyl phosphate binding site. The Proton acceptor role is filled by H64. 1-deoxy-D-xylulose 5-phosphate contacts are provided by R66 and H71. The active-site Proton acceptor is the E91. Position 121 (T121) interacts with 1-deoxy-D-xylulose 5-phosphate. H217 (proton donor) is an active-site residue. Residues G218 and 239–240 each bind 3-amino-2-oxopropyl phosphate; that span reads GH.

Belongs to the PNP synthase family. As to quaternary structure, homooctamer; tetramer of dimers.

The protein resides in the cytoplasm. The catalysed reaction is 3-amino-2-oxopropyl phosphate + 1-deoxy-D-xylulose 5-phosphate = pyridoxine 5'-phosphate + phosphate + 2 H2O + H(+). The protein operates within cofactor biosynthesis; pyridoxine 5'-phosphate biosynthesis; pyridoxine 5'-phosphate from D-erythrose 4-phosphate: step 5/5. Catalyzes the complicated ring closure reaction between the two acyclic compounds 1-deoxy-D-xylulose-5-phosphate (DXP) and 3-amino-2-oxopropyl phosphate (1-amino-acetone-3-phosphate or AAP) to form pyridoxine 5'-phosphate (PNP) and inorganic phosphate. The protein is Pyridoxine 5'-phosphate synthase of Psychrobacter cryohalolentis (strain ATCC BAA-1226 / DSM 17306 / VKM B-2378 / K5).